Consider the following 299-residue polypeptide: ATP phosphoribosyltransferase (299 aa).

It belongs to the ATP phosphoribosyltransferase family. Long subfamily. As to quaternary structure, equilibrium between an active dimeric form, an inactive hexameric form and higher aggregates. Interconversion between the various forms is largely reversible and is influenced by the natural substrates and inhibitors of the enzyme. It depends on Mg(2+) as a cofactor.

It is found in the cytoplasm. It carries out the reaction 1-(5-phospho-beta-D-ribosyl)-ATP + diphosphate = 5-phospho-alpha-D-ribose 1-diphosphate + ATP. It participates in amino-acid biosynthesis; L-histidine biosynthesis; L-histidine from 5-phospho-alpha-D-ribose 1-diphosphate: step 1/9. Feedback inhibited by histidine. In terms of biological role, catalyzes the condensation of ATP and 5-phosphoribose 1-diphosphate to form N'-(5'-phosphoribosyl)-ATP (PR-ATP). Has a crucial role in the pathway because the rate of histidine biosynthesis seems to be controlled primarily by regulation of HisG enzymatic activity. The sequence is that of ATP phosphoribosyltransferase from Escherichia coli O8 (strain IAI1).